Consider the following 87-residue polypeptide: Beta-toxin Cn5 (87 aa).

A signal peptide spans 1–19; the sequence is MNSLLMITACLFLIGTVWA. The region spanning 20-85 is the LCN-type CS-alpha/beta domain; it reads KEGYLVNKST…TYPLPNKSCS (66 aa). Disulfide bonds link Cys31-Cys84, Cys35-Cys60, Cys44-Cys65, and Cys48-Cys67.

Belongs to the long (4 C-C) scorpion toxin superfamily. Sodium channel inhibitor family. Beta subfamily. In terms of tissue distribution, expressed by the venom gland.

It is found in the secreted. In terms of biological role, beta toxins bind voltage-independently at site-4 of sodium channels (Nav) and shift the voltage of activation toward more negative potentials thereby affecting sodium channel activation and promoting spontaneous and repetitive firing. This toxin is lethal to crustaceans (freshwater crayfish (Cambarellus montezumae spp.)), it provokes a reversible paralysis to insects (crickets (Achaeta spp.)), but is not toxic to mice. At high concentrations, it does displace the (beta) mammal-specific toxin Cn2 from rat brain synaptosomes. This chain is Beta-toxin Cn5, found in Centruroides noxius (Mexican scorpion).